Reading from the N-terminus, the 485-residue chain is Efflux pump bik6 (485 aa).

A run of 6 helical transmembrane segments spans residues V42–Y62, L86–G106, K108–A128, F139–I159, Y172–A192, and W199–L219. An N-linked (GlcNAc...) asparagine glycan is attached at N241. 6 helical membrane passes run M269–L289, W306–A326, L353–T373, S379–F399, A417–W437, and W447–F467.

Belongs to the major facilitator superfamily.

Its subcellular location is the membrane. Efflux pump; part of the gene cluster that mediates the biosynthesis of bikaverin, a red pigment also considered as a mycotoxin. The protein is Efflux pump bik6 of Gibberella fujikuroi (strain CBS 195.34 / IMI 58289 / NRRL A-6831) (Bakanae and foot rot disease fungus).